The primary structure comprises 89 residues: UPF0367 protein PCC8801_1959 (89 aa).

Belongs to the UPF0367 family.

This Rippkaea orientalis (strain PCC 8801 / RF-1) (Cyanothece sp. (strain PCC 8801)) protein is UPF0367 protein PCC8801_1959.